Reading from the N-terminus, the 70-residue chain is Conotoxin Im11.11 (70 aa).

A signal peptide spans 1–25; that stretch reads MFRLTSVGCILLVIAFLNLVGLTNA. Intrachain disulfides connect Cys-26-Cys-40, Cys-33-Cys-45, Cys-39-Cys-49, and Cys-44-Cys-53. Pro-56 is modified (proline amide). The propeptide occupies 60–70; it reads TRLQGFFKHRR.

The protein belongs to the conotoxin I2 superfamily. As to expression, expressed by the venom duct.

Its subcellular location is the secreted. Probable neurotoxin. In Conus imperialis (Imperial cone), this protein is Conotoxin Im11.11.